Here is a 62-residue protein sequence, read N- to C-terminus: Large ribosomal subunit protein bL28 (62 aa).

It belongs to the bacterial ribosomal protein bL28 family.

The protein is Large ribosomal subunit protein bL28 of Helicobacter acinonychis (strain Sheeba).